A 162-amino-acid chain; its full sequence is Corticoliberin-1 (162 aa).

The signal sequence occupies residues 1–24; sequence MKLNFLVTTVALLVAFPPPYECRA. Residues 25–119 constitute a propeptide that is removed on maturation; it reads IDSSSNQPAT…ALDSEERERR (95 aa). Position 160 is a phenylalanine amide (F160).

This sequence belongs to the sauvagine/corticotropin-releasing factor/urotensin I family.

The protein localises to the secreted. In terms of biological role, this hormone from hypothalamus regulates the release of corticotropin from pituitary gland. This chain is Corticoliberin-1 (crf1), found in Catostomus commersonii (White sucker).